Here is a 307-residue protein sequence, read N- to C-terminus: Atrochrysone carboxyl ACP thioesterase (307 aa).

Residues H104, H106, D108, and H109 each contribute to the Zn(2+) site. Catalysis depends on D108, which acts as the Proton donor/acceptor.

The protein belongs to the metallo-beta-lactamase superfamily. Zn(2+) is required as a cofactor.

It catalyses the reaction atrochrysone carboxyl-[ACP] + H2O = atrochrysone carboxylate + holo-[ACP] + H(+). It functions in the pathway secondary metabolite biosynthesis. Its function is as follows. Atrochrysone carboxyl ACP thioesterase; part of the gene cluster that mediates the biosynthesis of monodictyphenone, a prenyl xanthone derivative. The pathway begins with the synthesis of atrochrysone thioester by the polyketide synthase (PKS) mdpG. The atrochrysone carboxyl ACP thioesterase mdpF then breaks the thioester bond and releases the atrochrysone carboxylic acid from mdpG. The atrochrysone carboxylic acid is then converted to atrochrysone which is further transformed into emodin anthrone. The next step is performed by the anthrone oxygenase mdpH that catalyzes the oxidation of emodinanthrone to emodin. Emodin is further modified to yield monodictyphenone via several steps involving mdpB, mdpC mdpJ, mdpK and mdpL. The short chain dehydrogenase mdpC converts the tautomers of emodin hydroquinone into the 3-hydroxy-3,4-dihydroan-thracen-1(2H)-one derivative. These enzymes with xptA, xptB and xptC are also proposed to be involved in the synthesis of shamixanthone from emodin. Especially, direct reduction of emodin by the short chain dehydrogenase mdpC followed by dehydration catalyzed by the scytalone dehydratase-like protein mdpB gives loss of oxygen and formation of chrysophanol intermediate in two simple steps. This is Atrochrysone carboxyl ACP thioesterase from Emericella nidulans (strain FGSC A4 / ATCC 38163 / CBS 112.46 / NRRL 194 / M139) (Aspergillus nidulans).